We begin with the raw amino-acid sequence, 633 residues long: Polypeptide N-acetylgalactosaminyltransferase 3 (633 aa).

Residues 1–19 (MAHLKRLVKLHIKRHYHKK) are Cytoplasmic-facing. The helical; Signal-anchor for type II membrane protein transmembrane segment at 20–37 (FWKLGAVIFFFIIVLVLM) threads the bilayer. Residues 38–633 (QREVSVQYSK…LQKWILSQND (596 aa)) are Lumenal-facing. Asn-132 carries an N-linked (GlcNAc...) asparagine glycan. The tract at residues 184 to 293 (LPTTSVIIVF…YGWLEPLLAR (110 aa)) is catalytic subdomain A. The Mn(2+) site is built by Asp-277 and His-279. Asn-297 carries N-linked (GlcNAc...) asparagine glycosylation. The tract at residues 356 to 418 (PIKTPTFAGG…PCSVVGHVFR (63 aa)) is catalytic subdomain B. Residue His-415 coordinates Mn(2+). A glycan (N-linked (GlcNAc...) asparagine) is linked at Asn-484. Positions 504 to 630 (VISGYIKSVG…SDPLQKWILS (127 aa)) constitute a Ricin B-type lectin domain. A disulfide bond links Cys-517 and Cys-535. Residues Asp-519, Glu-522, His-536, and Asn-541 each coordinate UDP-N-acetyl-alpha-D-galactosamine. Intrachain disulfides connect Cys-561–Cys-574 and Cys-605–Cys-618.

This sequence belongs to the glycosyltransferase 2 family. GalNAc-T subfamily. The cofactor is Mn(2+). As to expression, expressed in organs that contain secretory epithelial glands. Highly expressed in pancreas, skin, kidney and testis. Weakly expressed in prostate, ovary, intestine and colon. Also expressed in placenta and lung and fetal lung and fetal kidney.

It localises to the golgi apparatus. The protein resides in the golgi stack membrane. It catalyses the reaction L-seryl-[protein] + UDP-N-acetyl-alpha-D-galactosamine = a 3-O-[N-acetyl-alpha-D-galactosaminyl]-L-seryl-[protein] + UDP + H(+). The catalysed reaction is L-threonyl-[protein] + UDP-N-acetyl-alpha-D-galactosamine = a 3-O-[N-acetyl-alpha-D-galactosaminyl]-L-threonyl-[protein] + UDP + H(+). It functions in the pathway protein modification; protein glycosylation. Catalyzes the initial reaction in O-linked oligosaccharide biosynthesis, the transfer of an N-acetyl-D-galactosamine residue to a serine or threonine residue on the protein receptor. Has activity toward HIV envelope glycoprotein gp120, EA2, MUC2, MUC1A and MUC5AC. Probably glycosylates fibronectin in vivo. Glycosylates FGF23. In Homo sapiens (Human), this protein is Polypeptide N-acetylgalactosaminyltransferase 3 (GALNT3).